The primary structure comprises 37 residues: Alpha-conotoxin LvIA (37 aa).

The propeptide occupies 1-20 (FRGRDAAAKASGLVGLTDRR). 2 disulfides stabilise this stretch: Cys22/Cys28 and Cys23/Cys36. Residues 24–26 (SHP) form a ser-Xaa-Pro motif, crucial for potent interaction with nAChR region. Cys36 is subject to Cysteine amide.

Belongs to the conotoxin A superfamily. In terms of tissue distribution, expressed by the venom duct.

It localises to the secreted. Its function is as follows. Alpha-conotoxins act on postsynaptic membranes, they bind to the nicotinic acetylcholine receptors (nAChR) and thus inhibit them. This toxin blocks alpha-3-beta-2/CHRNA3-CHRNB2 nAChR with high selectivity (IC(50)=8.67 nM (on rat) and 17.5 (on human)). Also has weaker activity on alpha-6/alpha-3-beta-2-beta-3 (CHRNA6/CHRNA3-CHRNB2-CHRNB3) (IC(50)=108 nM (on rat)), alpha-6/alpha-3-beta-4 (CHRNA6/CHRNA3-CHRNB4) (IC(50)=121 nM (on rat)), alpha-3-beta-4 (CHRNA3-CHRNB4) (IC(50)=148 nM (on rat)), and alpha-7/CHRNA7 nAChRs (IC(50)=3000 nM (on rat)). When tested on mouse with hot-plate tests, this toxin significantly increases the base pain threshold and shows analgesic effects. This Conus lividus (Livid cone) protein is Alpha-conotoxin LvIA.